The primary structure comprises 394 residues: Formate-dependent phosphoribosylglycinamide formyltransferase (394 aa).

Residues 22-23 and glutamate 82 contribute to the N(1)-(5-phospho-beta-D-ribosyl)glycinamide site; that span reads EL. Residues arginine 114, lysine 155, 160 to 165, 195 to 198, and glutamate 203 contribute to the ATP site; these read SSGKGQ and EGFV. Residues 119 to 308 form the ATP-grasp domain; it reads RLAAETLKLP…EFALHVRAIL (190 aa). Mg(2+) is bound by residues glutamate 267 and glutamate 279. N(1)-(5-phospho-beta-D-ribosyl)glycinamide contacts are provided by residues aspartate 286, lysine 357, and 364–365; that span reads RR.

It belongs to the PurK/PurT family. As to quaternary structure, homodimer.

It carries out the reaction N(1)-(5-phospho-beta-D-ribosyl)glycinamide + formate + ATP = N(2)-formyl-N(1)-(5-phospho-beta-D-ribosyl)glycinamide + ADP + phosphate + H(+). It participates in purine metabolism; IMP biosynthesis via de novo pathway; N(2)-formyl-N(1)-(5-phospho-D-ribosyl)glycinamide from N(1)-(5-phospho-D-ribosyl)glycinamide (formate route): step 1/1. Functionally, involved in the de novo purine biosynthesis. Catalyzes the transfer of formate to 5-phospho-ribosyl-glycinamide (GAR), producing 5-phospho-ribosyl-N-formylglycinamide (FGAR). Formate is provided by PurU via hydrolysis of 10-formyl-tetrahydrofolate. The polypeptide is Formate-dependent phosphoribosylglycinamide formyltransferase (Tolumonas auensis (strain DSM 9187 / NBRC 110442 / TA 4)).